The following is a 406-amino-acid chain: Argininosuccinate synthase (406 aa).

ATP is bound by residues 12–20 (AYSGGLDTS) and A39. The L-citrulline site is built by Y90 and S95. Position 120 (G120) interacts with ATP. L-aspartate contacts are provided by T122, N126, and D127. N126 lines the L-citrulline pocket. R130, S179, S188, E264, and Y276 together coordinate L-citrulline.

This sequence belongs to the argininosuccinate synthase family. Type 1 subfamily. In terms of assembly, homotetramer.

It is found in the cytoplasm. The enzyme catalyses L-citrulline + L-aspartate + ATP = 2-(N(omega)-L-arginino)succinate + AMP + diphosphate + H(+). It participates in amino-acid biosynthesis; L-arginine biosynthesis; L-arginine from L-ornithine and carbamoyl phosphate: step 2/3. This Geotalea daltonii (strain DSM 22248 / JCM 15807 / FRC-32) (Geobacter daltonii) protein is Argininosuccinate synthase.